Consider the following 463-residue polypeptide: SCF E3 ubiquitin ligase complex F-box protein pof2 (463 aa).

In terms of domain architecture, F-box spans M1–V42. 10 LRR repeats span residues C145–R170, C171–K196, D198–V220, G225–N247, E249–L271, K278–T299, S304–K326, C328–L353, P354–S378, and S380–N405.

In terms of assembly, part of a SCF E3 ubiquitin ligase complex. Interacts with skp1.

The protein resides in the mitochondrion. Its function is as follows. Involved in substrate recognition in ubiquitin-dependent degradation. The protein is SCF E3 ubiquitin ligase complex F-box protein pof2 (pof2) of Schizosaccharomyces pombe (strain 972 / ATCC 24843) (Fission yeast).